Reading from the N-terminus, the 125-residue chain is Small ribosomal subunit protein uS12 (125 aa).

The segment at 9 to 31 (RQGREVEKIKSKSPAMENSPQRR) is disordered. The residue at position 89 (Asp-89) is a 3-methylthioaspartic acid.

The protein belongs to the universal ribosomal protein uS12 family. In terms of assembly, part of the 30S ribosomal subunit. Contacts proteins S8 and S17. May interact with IF1 in the 30S initiation complex.

In terms of biological role, with S4 and S5 plays an important role in translational accuracy. Functionally, interacts with and stabilizes bases of the 16S rRNA that are involved in tRNA selection in the A site and with the mRNA backbone. Located at the interface of the 30S and 50S subunits, it traverses the body of the 30S subunit contacting proteins on the other side and probably holding the rRNA structure together. The combined cluster of proteins S8, S12 and S17 appears to hold together the shoulder and platform of the 30S subunit. The polypeptide is Small ribosomal subunit protein uS12 (Verminephrobacter eiseniae (strain EF01-2)).